Reading from the N-terminus, the 122-residue chain is Small ribosomal subunit protein uS13 (122 aa).

The tract at residues 99 to 122 (RGQRTHTNARTRKGPAKAIAGKKK) is disordered.

Belongs to the universal ribosomal protein uS13 family. Part of the 30S ribosomal subunit. Forms a loose heterodimer with protein S19. Forms two bridges to the 50S subunit in the 70S ribosome.

In terms of biological role, located at the top of the head of the 30S subunit, it contacts several helices of the 16S rRNA. In the 70S ribosome it contacts the 23S rRNA (bridge B1a) and protein L5 of the 50S subunit (bridge B1b), connecting the 2 subunits; these bridges are implicated in subunit movement. Contacts the tRNAs in the A and P-sites. This is Small ribosomal subunit protein uS13 from Rhodopseudomonas palustris (strain HaA2).